A 245-amino-acid chain; its full sequence is Bax inhibitor 1 (245 aa).

Topologically, residues 1-30 (MADTANYINDRFQTFMNGLGDRYEPYVREH) are cytoplasmic. A helical transmembrane segment spans residues 31–51 (LSKVYMVLGSTAAATAMGAML). At 52–55 (QMRD) the chain is on the lumenal side. Residues 56–76 (FLDLGVLAAVATLVLVLGLHF) traverse the membrane as a helical segment. Over 77–88 (YKDDGKNYYTRL) the chain is Cytoplasmic. The chain crosses the membrane as a helical span at residues 89 to 109 (GMLYAFGFCSGQTLGPLLGYI). Residues 110–115 (CSINPA) are Lumenal-facing. Residues 116–136 (IILSALTGTFVTFISLSLSAL) traverse the membrane as a helical segment. The Cytoplasmic segment spans residues 137–142 (LAEQGK). Residues 143–163 (YLYLGGMLVSVINTMALLSLF) form a helical membrane-spanning segment. At 164 to 169 (NMVFKS) the chain is on the lumenal side. Residues 170–190 (YFVQVTQLYVGVFVMAAFIVY) form a helical membrane-spanning segment. Topologically, residues 191-245 (DTQNIVEKCRNGNRDVVQHALDLFFDVLSMFRRLLIILTQKEERKQNERRQNKTK) are cytoplasmic.

This sequence belongs to the BI1 family.

It localises to the endoplasmic reticulum membrane. Functionally, suppressor of apoptosis. Modulates unfolded protein response signaling. Negatively regulates autophagy and autophagosome formation, especially during periods of nutrient deprivation, and reduces cell survival during starvation. The sequence is that of Bax inhibitor 1 from Drosophila melanogaster (Fruit fly).